Consider the following 542-residue polypeptide: Prolyl 3-hydroxylase OGFOD1 (542 aa).

Positions 134-239 (DLESTIDMSC…RLSISGWFHG (106 aa)) constitute a Fe2OG dioxygenase domain. Fe cation-binding residues include histidine 155 and aspartate 157. Tyrosine 169 contributes to the 2-oxoglutarate binding site. Residue histidine 218 coordinates Fe cation. A 2-oxoglutarate-binding site is contributed by arginine 230. Positions 373–435 (EDEMNDKKEA…TKKESSVPTC (63 aa)) are disordered. Over residues 400-416 (ENNQTAISNNSQQSNEQ) the composition is skewed to polar residues.

It belongs to the TPA1 family. Monomer. It depends on Fe(2+) as a cofactor. L-ascorbate is required as a cofactor.

It is found in the cytoplasm. Its subcellular location is the nucleus. It carries out the reaction [ribosomal protein uS12]-L-proline + 2-oxoglutarate + O2 = [ribosomal protein uS12]-(3S)-3-hydroxy-L-proline + succinate + CO2. Prolyl 3-hydroxylase that catalyzes 3-hydroxylation of 'Pro-62' of small ribosomal subunit uS12 (RPS23), thereby regulating protein translation termination efficiency. Involved in stress granule formation. The protein is Prolyl 3-hydroxylase OGFOD1 (OGFOD1) of Pongo abelii (Sumatran orangutan).